The chain runs to 179 residues: uncharacterized protein (179 aa).

4 helical membrane passes run 33-53, 63-83, 89-109, and 115-135; these read HIIALASKIAFTLALLYVILD, VMFIALFLGFVSYLSGDMLVL, ITASLADFGLSFVILWVFVLT, and FSPFGAALLSAACLTVFEYFF.

It localises to the cell membrane. This is an uncharacterized protein from Bacillus subtilis (strain 168).